We begin with the raw amino-acid sequence, 214 residues long: Putative 3-methyladenine DNA glycosylase (214 aa).

It belongs to the DNA glycosylase MPG family.

This chain is Putative 3-methyladenine DNA glycosylase, found in Mycobacterium leprae (strain Br4923).